The sequence spans 33 residues: Photosystem II reaction center protein Psb30 (33 aa).

A helical transmembrane segment spans residues 5–25 (IVAQLTVLALIVVSGPLVIAL).

Belongs to the Psb30/Ycf12 family. As to quaternary structure, PSII is composed of 1 copy each of membrane proteins PsbA, PsbB, PsbC, PsbD, PsbE, PsbF, PsbH, PsbI, PsbJ, PsbK, PsbL, PsbM, PsbT, PsbX, PsbY, PsbZ, Psb30/Ycf12, peripheral proteins of the oxygen-evolving complex and a large number of cofactors. It forms dimeric complexes.

Its subcellular location is the plastid. It localises to the chloroplast thylakoid membrane. In terms of biological role, a core subunit of photosystem II (PSII), probably helps stabilize the reaction center. The chain is Photosystem II reaction center protein Psb30 from Angiopteris evecta (Mule's foot fern).